Consider the following 182-residue polypeptide: MKEKEIQENMNKSIEATQRNFNTIRTGRANASLLDRVSVEYYGAETPIKSLATISTVDSQTISIQPFDISCLQAIEKSISMSDLGITPNNDGKVIRINVPPLTEERRKEFCKLASKYAEEGKVALRNIRRDAVDKEKKDEKDGLISIDESRDNQSEIQKITDKYIALIETKLSEKEKEILKV.

Belongs to the RRF family.

The protein localises to the cytoplasm. In terms of biological role, responsible for the release of ribosomes from messenger RNA at the termination of protein biosynthesis. May increase the efficiency of translation by recycling ribosomes from one round of translation to another. The protein is Ribosome-recycling factor of Prochlorococcus marinus (strain AS9601).